Consider the following 252-residue polypeptide: 3-deoxy-manno-octulosonate cytidylyltransferase (252 aa).

Belongs to the KdsB family.

It is found in the cytoplasm. It carries out the reaction 3-deoxy-alpha-D-manno-oct-2-ulosonate + CTP = CMP-3-deoxy-beta-D-manno-octulosonate + diphosphate. It functions in the pathway nucleotide-sugar biosynthesis; CMP-3-deoxy-D-manno-octulosonate biosynthesis; CMP-3-deoxy-D-manno-octulosonate from 3-deoxy-D-manno-octulosonate and CTP: step 1/1. Its pathway is bacterial outer membrane biogenesis; lipopolysaccharide biosynthesis. Its function is as follows. Activates KDO (a required 8-carbon sugar) for incorporation into bacterial lipopolysaccharide in Gram-negative bacteria. The protein is 3-deoxy-manno-octulosonate cytidylyltransferase of Xylella fastidiosa (strain Temecula1 / ATCC 700964).